A 264-amino-acid chain; its full sequence is S-adenosylmethionine decarboxylase proenzyme (264 aa).

The Schiff-base intermediate with substrate; via pyruvic acid role is filled by S112. Pyruvic acid (Ser); by autocatalysis is present on S112. The active-site Proton acceptor; for processing activity is the H117. C140 serves as the catalytic Proton donor; for catalytic activity.

This sequence belongs to the prokaryotic AdoMetDC family. Type 2 subfamily. In terms of assembly, heterooctamer of four alpha and four beta chains arranged as a tetramer of alpha/beta heterodimers. Requires pyruvate as cofactor. Post-translationally, is synthesized initially as an inactive proenzyme. Formation of the active enzyme involves a self-maturation process in which the active site pyruvoyl group is generated from an internal serine residue via an autocatalytic post-translational modification. Two non-identical subunits are generated from the proenzyme in this reaction, and the pyruvate is formed at the N-terminus of the alpha chain, which is derived from the carboxyl end of the proenzyme. The post-translation cleavage follows an unusual pathway, termed non-hydrolytic serinolysis, in which the side chain hydroxyl group of the serine supplies its oxygen atom to form the C-terminus of the beta chain, while the remainder of the serine residue undergoes an oxidative deamination to produce ammonia and the pyruvoyl group blocking the N-terminus of the alpha chain.

It carries out the reaction S-adenosyl-L-methionine + H(+) = S-adenosyl 3-(methylsulfanyl)propylamine + CO2. It participates in amine and polyamine biosynthesis; S-adenosylmethioninamine biosynthesis; S-adenosylmethioninamine from S-adenosyl-L-methionine: step 1/1. Functionally, catalyzes the decarboxylation of S-adenosylmethionine to S-adenosylmethioninamine (dcAdoMet), the propylamine donor required for the synthesis of the polyamines spermine and spermidine from the diamine putrescine. The chain is S-adenosylmethionine decarboxylase proenzyme from Pectobacterium atrosepticum (strain SCRI 1043 / ATCC BAA-672) (Erwinia carotovora subsp. atroseptica).